Consider the following 154-residue polypeptide: Protein-export protein SecB (154 aa).

This sequence belongs to the SecB family. Homotetramer, a dimer of dimers. One homotetramer interacts with 1 SecA dimer.

Its subcellular location is the cytoplasm. In terms of biological role, one of the proteins required for the normal export of preproteins out of the cell cytoplasm. It is a molecular chaperone that binds to a subset of precursor proteins, maintaining them in a translocation-competent state. It also specifically binds to its receptor SecA. This Vibrio cholerae serotype O1 (strain ATCC 39541 / Classical Ogawa 395 / O395) protein is Protein-export protein SecB.